Consider the following 86-residue polypeptide: Teretoxin Tsu6.16 (86 aa).

The first 21 residues, 1-21 (MATSGRLLCVCLVMGLVFESL), serve as a signal peptide directing secretion. The propeptide occupies 22-46 (GYLTGREKRPAENLEASVQRRWYLN).

It belongs to the teretoxin M (TM) superfamily. Contains 3 disulfide bonds. As to expression, expressed by the venom duct.

It is found in the secreted. This Terebra subulata (Chocolate spotted auger) protein is Teretoxin Tsu6.16.